A 79-amino-acid polypeptide reads, in one-letter code: ATP synthase subunit beta (79 aa).

Belongs to the ATPase alpha/beta chains family. In terms of assembly, F-type ATPases have 2 components, CF(1) - the catalytic core - and CF(0) - the membrane proton channel. CF(1) has five subunits: alpha(3), beta(3), gamma(1), delta(1), epsilon(1). CF(0) has three main subunits: a(1), b(2) and c(9-12). The alpha and beta chains form an alternating ring which encloses part of the gamma chain. CF(1) is attached to CF(0) by a central stalk formed by the gamma and epsilon chains, while a peripheral stalk is formed by the delta and b chains.

Its subcellular location is the cell membrane. The enzyme catalyses ATP + H2O + 4 H(+)(in) = ADP + phosphate + 5 H(+)(out). In terms of biological role, produces ATP from ADP in the presence of a proton gradient across the membrane. The catalytic sites are hosted primarily by the beta subunits. This Streptococcus downei (Streptococcus sobrinus) protein is ATP synthase subunit beta (atpD).